A 41-amino-acid chain; its full sequence is Large ribosomal subunit protein bL36 (41 aa).

The protein belongs to the bacterial ribosomal protein bL36 family.

This is Large ribosomal subunit protein bL36 from Hydrogenovibrio crunogenus (strain DSM 25203 / XCL-2) (Thiomicrospira crunogena).